Reading from the N-terminus, the 236-residue chain is uncharacterized protein (236 aa).

Positions 5–73 (QSTVENAKEK…DRKGWFVTQP (69 aa)) constitute an HTH gntR-type domain. A DNA-binding region (H-T-H motif) is located at residues 33–52 (ERELGELLGIKRMTLRQALL).

This is an uncharacterized protein from Escherichia coli O157:H7.